We begin with the raw amino-acid sequence, 141 residues long: Galactose-6-phosphate isomerase subunit LacA 1 (141 aa).

Belongs to the LacAB/RpiB family. Heteromultimeric protein consisting of LacA and LacB.

It carries out the reaction aldehydo-D-galactose 6-phosphate = keto-D-tagatose 6-phosphate. It participates in carbohydrate metabolism; D-galactose 6-phosphate degradation; D-tagatose 6-phosphate from D-galactose 6-phosphate: step 1/1. The protein is Galactose-6-phosphate isomerase subunit LacA 1 of Streptococcus pyogenes serotype M3 (strain SSI-1).